Consider the following 336-residue polypeptide: N-acetylornithine carbamoyltransferase (336 aa).

Residues 49–52, tryptophan 77, and arginine 112 each bind carbamoyl phosphate; that span reads SMRT. Residue glutamate 144 coordinates N(2)-acetyl-L-ornithine. 148-151 provides a ligand contact to carbamoyl phosphate; it reads HPCQ. Lysine 252 and leucine 295 together coordinate N(2)-acetyl-L-ornithine. Position 294–295 (294–295) interacts with carbamoyl phosphate; the sequence is CL. The residue at position 302 (lysine 302) is an N6-carboxylysine. A carbamoyl phosphate-binding site is contributed by arginine 322.

This sequence belongs to the aspartate/ornithine carbamoyltransferase superfamily. AOTCase family. Homotrimer.

The protein localises to the cytoplasm. It catalyses the reaction N(2)-acetyl-L-ornithine + carbamoyl phosphate = N(2)-acetyl-L-citrulline + phosphate + H(+). It functions in the pathway amino-acid biosynthesis; L-arginine biosynthesis. With respect to regulation, carboxylation at Lys-302 increases the catalytic activity of the enzyme. Catalyzes the transfer of the carbamoyl group from carbamoyl phosphate to the delta-amino group of N(2)-acetyl-L-ornithine to produce N(2)-acetyl-L-citrulline. This is a step in an alternative arginine biosynthesis pathway. The enzyme has no activity with ornithine. This chain is N-acetylornithine carbamoyltransferase, found in Xylella fastidiosa (strain 9a5c).